The chain runs to 326 residues: MDIKLGKYKPVKEEYIKSFKDMLLLRRFEEKCGQLYGMGEIGGFCHLYIGQEAVISAVDMVKQKEDSMVTSYRDHAHIILAGTEPKYVLAELMGRATGCSKGKGGSMHLFDVPNKFYGGHGIVGAQVPIGTGLAFAEKYNGTNNICFTFLGDGAVNQGQVYEAFNMAALWGLPVVYIIENNEYSMGTSVARSTFMRDLYKKGESFGIKGFQLNGMDFEEMYDGVKQAAEYVRENSMPLILEVKTYRYRGHSMSDPAKYRSKEEVETYKERDPITEIRKIILENNYASEADLKEIEQSVKEIVKEAVEFSENSPLPNEEELYTQIYV.

As to quaternary structure, heterodimer of an alpha and a beta chain. Requires thiamine diphosphate as cofactor.

The enzyme catalyses N(6)-[(R)-lipoyl]-L-lysyl-[protein] + pyruvate + H(+) = N(6)-[(R)-S(8)-acetyldihydrolipoyl]-L-lysyl-[protein] + CO2. The pyruvate dehydrogenase complex catalyzes the overall conversion of pyruvate to acetyl-CoA and CO(2). It contains multiple copies of three enzymatic components: pyruvate dehydrogenase (E1), dihydrolipoamide acetyltransferase (E2) and lipoamide dehydrogenase (E3). The sequence is that of Pyruvate dehydrogenase E1 component subunit alpha (pdhA) from Rickettsia bellii (strain RML369-C).